Consider the following 361-residue polypeptide: MTQVYNFSSGPAMLPVEVLRRAEQELCNWHGLGTSVMEISHRSKEFIEVAQQSEQDLRDLLKIPSNYKVLFCHGGARAQFAALPLNLLGDKTTADYIDGGYWAHSAITEAQKYCTPNTIDVKTSVDGLLGIKPMKEWQLSDDAAYVHYCPNETIDGVAIDELPDFGDKVVIGDYSSTILSGPLDVSRFGVIYAGAQKNIGPAGLTLVIVREDLLGKARREVPSILDYTVLAENDSMFNTPPTFAWYLSGLVFKWLKEQGGLVEMHKRNQAKAELLYATIDKSDFYRSRVALANRSWMNVPFQLADPALDKVFLSEAEAIGLQALKGHRVVGGMRASIYNAMPLAGVKTLTDFMVDFERRHG.

Residues S9 and R42 each coordinate L-glutamate. Residues 76 to 77 (AR), W102, T153, D173, and Q196 contribute to the pyridoxal 5'-phosphate site. K197 carries the N6-(pyridoxal phosphate)lysine modification. 238 to 239 (NT) lines the pyridoxal 5'-phosphate pocket.

It belongs to the class-V pyridoxal-phosphate-dependent aminotransferase family. SerC subfamily. As to quaternary structure, homodimer. Pyridoxal 5'-phosphate serves as cofactor.

It localises to the cytoplasm. The catalysed reaction is O-phospho-L-serine + 2-oxoglutarate = 3-phosphooxypyruvate + L-glutamate. It carries out the reaction 4-(phosphooxy)-L-threonine + 2-oxoglutarate = (R)-3-hydroxy-2-oxo-4-phosphooxybutanoate + L-glutamate. It participates in amino-acid biosynthesis; L-serine biosynthesis; L-serine from 3-phospho-D-glycerate: step 2/3. It functions in the pathway cofactor biosynthesis; pyridoxine 5'-phosphate biosynthesis; pyridoxine 5'-phosphate from D-erythrose 4-phosphate: step 3/5. Its function is as follows. Catalyzes the reversible conversion of 3-phosphohydroxypyruvate to phosphoserine and of 3-hydroxy-2-oxo-4-phosphonooxybutanoate to phosphohydroxythreonine. This Serratia proteamaculans (strain 568) protein is Phosphoserine aminotransferase.